The sequence spans 1195 residues: Chromosome partition protein Smc (1195 aa).

ATP is bound at residue 33–40; sequence PNGSGKSN. Coiled coils occupy residues 185-241, 273-348, and 380-528; these read GVAQ…RQEQ, DAAT…IQAL, and QYQQ…QETQ. The region spanning 542-658 is the SMC hinge domain; it reads PGVHGLVAQL…FERLDQARRY (117 aa). A coiled-coil region spans residues 698 to 1043; that stretch reads GESAEVRAIR…ELLLRIENFT (346 aa).

It belongs to the SMC family. As to quaternary structure, homodimer.

The protein resides in the cytoplasm. Functionally, required for chromosome condensation and partitioning. The polypeptide is Chromosome partition protein Smc (Synechococcus sp. (strain ATCC 27144 / PCC 6301 / SAUG 1402/1) (Anacystis nidulans)).